The primary structure comprises 232 residues: GTP cyclohydrolase III (232 aa).

It belongs to the archaeal-type GTP cyclohydrolase family.

The enzyme catalyses GTP + 3 H2O = 2-amino-5-formylamino-6-(5-phospho-D-ribosylamino)pyrimidin-4(3H)-one + 2 phosphate + 2 H(+). Functionally, catalyzes the formation of 2-amino-5-formylamino-6-ribofuranosylamino-4(3H)-pyrimidinone ribonucleotide monophosphate and inorganic phosphate from GTP. Also has an independent pyrophosphate phosphohydrolase activity. This chain is GTP cyclohydrolase III, found in Saccharolobus islandicus (strain Y.N.15.51 / Yellowstone #2) (Sulfolobus islandicus).